The primary structure comprises 296 residues: Thioredoxin-related transmembrane protein 2 (296 aa).

The N-terminal stretch at 1 to 48 (MAVLAPLIALVYSVPRLSRWLAQPYYLLSALLSAAFLLVRKLPPLCHG) is a signal peptide. Residues 49-102 (LPTQREDGNPCDFDWREVEILMFLSAIVMMKNRRSITVEQHIGNIFMFSKVANA) lie on the Extracellular side of the membrane. Residues 103-125 (ILFFRLDIRMGLLYITLCIVFLM) traverse the membrane as a helical segment. The region spanning 114–270 (LLYITLCIVF…YQRAKKPSKA (157 aa)) is the Thioredoxin domain. The Cytoplasmic segment spans residues 126–296 (TCEPPLYMGP…VSDGENKKDK (171 aa)). Phosphoserine occurs at positions 211, 243, and 288. Residues 266 to 296 (KPSKAGDSIPEEQPVASAPTTVSDGENKKDK) are disordered. The short motif at 293 to 296 (KKDK) is the Di-lysine motif element.

In terms of assembly, monomer. Homodimer; disulfide-linked. Occurs in both reduced and oxidized monomeric form. Oxidative conditions increase homodimerization. Interacts with CANX. Interacts with ATP2A2.

It is found in the endoplasmic reticulum membrane. The protein resides in the mitochondrion membrane. Functionally, endoplasmic reticulum and mitochondria-associated protein that probably functions as a regulator of cellular redox state and thereby regulates protein post-translational modification, protein folding and mitochondrial activity. Indirectly regulates neuronal proliferation, migration, and organization in the developing brain. The polypeptide is Thioredoxin-related transmembrane protein 2 (TMX2) (Pongo abelii (Sumatran orangutan)).